The chain runs to 301 residues: Multifunctional dioxygenase prhA (301 aa).

H130, D132, and H214 together coordinate Fe cation.

Belongs to the PhyH family. In terms of assembly, homodimer. It depends on Fe cation as a cofactor.

The enzyme catalyses preaustinoid A1 + 2-oxoglutarate + O2 = berkeleyone B + succinate + CO2 + H2O. It carries out the reaction berkeleyone B + 2-oxoglutarate + O2 = berkeleydione + succinate + CO2 + H2O. It catalyses the reaction preaustinoid A + 2 2-oxoglutarate + 2 O2 = berkeleytrione + 2 succinate + 2 CO2 + H2O. It participates in secondary metabolite biosynthesis; terpenoid biosynthesis. Its function is as follows. Multifunctional dioxygenase; part of the gene cluster that mediates the biosynthesis of paraherquonin, a meroterpenoid with a unique, highly congested hexacyclic molecular architecture. The first step of the pathway is the synthesis of 3,5-dimethylorsellinic acid (DMOA) by the polyketide synthase prhL. Synthesis of DMOA is followed by farnesylation by the prenyltransferase prhE, methylesterification by the methyl-transferase prhM, epoxidation of the prenyl chain by the flavin-dependent monooxygenase prhF, and cyclization of the farnesyl moiety by the terpene cyclase prhH, to yield the tetracyclic intermediate, protoaustinoid A. The short chain dehydrogenase prhI then oxidizes the C-3 alcohol group of the terpene cyclase product to transform protoaustinoid A into protoaustinoid B. The FAD-binding monooxygenase prhJ catalyzes the oxidation of protoaustinoid B into preaustinoid A which is further oxidized into preaustinoid A1 by FAD-binding monooxygenase phrK. Finally, prhA leads to berkeleydione via the berkeleyone B intermediate. PrhA is a multifunctional dioxygenase that first desaturates at C5-C6 to form berkeleyone B, followed by rearrangement of the A/B-ring to form the cycloheptadiene moiety in berkeleydione. Berkeleydione serves as the key intermediate for the biosynthesis of paraherquonin as well as many other meroterpenoids. The cytochrome P450 monooxygenases prhB, prhD, and prhN, as well as the isomerase prhC, are probably involved in the late stage of paraherquonin biosynthesis, after the production of berkeleydione. Especially prhC might be a multifunctional enzyme that catalyzes the D-ring expansion via intramolecular methoxy rearrangement, as well as the hydrolysis of the expanded D-ring. The polypeptide is Multifunctional dioxygenase prhA (Penicillium brasilianum).